Here is a 367-residue protein sequence, read N- to C-terminus: Uroporphyrinogen decarboxylase (367 aa).

Residue M1 is modified to N-acetylmethionine. Coproporphyrinogen I-binding residues include R37, A39, R41, R50, D86, Y164, S219, and H339. Coproporphyrinogen III-binding residues include R37, A39, and R41. Coproporphyrinogen III-binding residues include D86, Y164, S219, and H339.

This sequence belongs to the uroporphyrinogen decarboxylase family. As to quaternary structure, homodimer.

It is found in the cytoplasm. Its subcellular location is the cytosol. The enzyme catalyses uroporphyrinogen III + 4 H(+) = coproporphyrinogen III + 4 CO2. It carries out the reaction uroporphyrinogen I + 4 H(+) = coproporphyrinogen I + 4 CO2. It participates in porphyrin-containing compound metabolism; protoporphyrin-IX biosynthesis; coproporphyrinogen-III from 5-aminolevulinate: step 4/4. Functionally, catalyzes the sequential decarboxylation of the four acetate side chains of uroporphyrinogen to form coproporphyrinogen and participates in the fifth step in the heme biosynthetic pathway. Isomer I or isomer III of uroporphyrinogen may serve as substrate, but only coproporphyrinogen III can ultimately be converted to heme. In vitro also decarboxylates pentacarboxylate porphyrinogen I. This is Uroporphyrinogen decarboxylase from Mus musculus (Mouse).